The following is a 137-amino-acid chain: ATP synthase epsilon chain (137 aa).

This sequence belongs to the ATPase epsilon chain family. F-type ATPases have 2 components, CF(1) - the catalytic core - and CF(0) - the membrane proton channel. CF(1) has five subunits: alpha(3), beta(3), gamma(1), delta(1), epsilon(1). CF(0) has three main subunits: a, b and c.

It localises to the cell membrane. Its function is as follows. Produces ATP from ADP in the presence of a proton gradient across the membrane. The protein is ATP synthase epsilon chain of Syntrophomonas wolfei subsp. wolfei (strain DSM 2245B / Goettingen).